The primary structure comprises 175 residues: Chromobox protein homolog hpl-2 (175 aa).

In terms of domain architecture, Chromo spans 19–78; that stretch reads FMVEKVLDKRTGKAGRDEFLIQWQGFPESDSSWEPRENLQCVEMLDEFEREFSKREKPIR. Residues 71-109 are disordered; it reads SKREKPIRKRHSQKPEPSEDQADPEEDKDEKKETNQNDK. A compositionally biased stretch (acidic residues) spans 88–98; sequence SEDQADPEEDK. The segment covering 99-109 has biased composition (basic and acidic residues); the sequence is DEKKETNQNDK. Residues 115-172 enclose the Chromo 2; shadow subtype domain; that stretch reads KQLKCIVGLTKGPGELHFLCKFSDDTARLLPAKEVNSRYPSQVIRYYESKLTIQDPKA.

As to quaternary structure, interacts with histone H3 when di-, or tri-methylated at 'Lys-27' (H3K27me2/me3), or tri-methylated at 'Lys-9' (H3K9me3). Interacts with Tar DNA-binding protein homolog tdp-1; interaction may maintain localization of hpl-2 to gene bodies. Interacts with histone H1 his-24, probably via interaction with hpl-1. Interacts with chromobox protein homolog hpl-1. In terms of assembly, may form homodimers. Interacts (via chromo (shadow subtype) domain) with zinc finger protein lin-13 (via PLVPV motif); the interaction is direct and influences localization of hpl-2 to nuclear foci.

Its subcellular location is the nucleus. The protein resides in the chromosome. Seems to be involved in transcriptional silencing in heterochromatin-like complexes. Probably does not act as global transcriptional repressor, instead targeting a subset of genes. Involved in RNA processing mediated by Tar DNA-binding protein homolog tdp-1. Plays a role in linking epigenetic regulation with the innate immune response. Involved in the endoplasmic reticulum (ER) stress response via modulation of the unfolded protein response (UPR), acting mainly through the IRE1-XBP1 pathway and perhaps, to a lesser extent, through the autophagy pathway. May act in a common pathway with retinoblastoma-like protein homolog lin-35 and zinc finger protein lin-13 to influence the ER stress response in the intestine. Plays a role in the formation of the vulva and in fertility, acting together with a CoREST-like complex, and chromobox protein homolog hpl-1. Acting in concert with hpl-1 and histone H1 protein his-24, involved in reproduction, somatic gonad development, male tail development and vulval cell fate specification; perhaps as a result of modulating expression of Hox genes mab-5 and egl-5. In vulval cell fate specification may act by repressing transcription, of EGF family gene lin-3 in hypodermal hyp7, and of homeobox lin-39 in vulval precursor cells (VPC). Role in growth and somatic gonad development is antagonized by histone-lysine N-methyltransferase set-2/SET1. Required for larval development, acting redundantly with hpl-1. Plays a role in regulation of the developmentally arrested larval state known as dauer, longevity, and lipid metabolism. This Caenorhabditis elegans protein is Chromobox protein homolog hpl-2.